Reading from the N-terminus, the 40-residue chain is Antimicrobial peptide 1 (40 aa).

The Chitin-binding type-1 domain maps to 1-40; that stretch reads AQCGAQGGGATCPGGLCCSQWGWCGSTPKYCGAGCQSNCK. Disulfide bonds link Cys-3-Cys-18, Cys-12-Cys-24, Cys-17-Cys-31, and Cys-35-Cys-39.

Not glycosylated.

Its function is as follows. Antimicrobial peptide active against plant pathogenic fungi and Gram-negative and -positive bacteria. This chain is Antimicrobial peptide 1, found in Fagopyrum esculentum (Common buckwheat).